A 141-amino-acid chain; its full sequence is Large-conductance mechanosensitive channel (141 aa).

2 consecutive transmembrane segments (helical) span residues 16-36 (VIDLAVGVIIGGAFGKIVDSL) and 83-103 (GAFINTTIDFLIIALAIFVAI).

Belongs to the MscL family. Homopentamer.

The protein resides in the cell inner membrane. Channel that opens in response to stretch forces in the membrane lipid bilayer. May participate in the regulation of osmotic pressure changes within the cell. The sequence is that of Large-conductance mechanosensitive channel from Azoarcus sp. (strain BH72).